The chain runs to 454 residues: Metalloprotease MTH_856 (454 aa).

The interval 92–115 (QVGSGAPSVDKTMVRSSRPPSDVP) is disordered.

This sequence belongs to the peptidase U62 family.

Functionally, probable metalloprotease. This chain is Metalloprotease MTH_856, found in Methanothermobacter thermautotrophicus (strain ATCC 29096 / DSM 1053 / JCM 10044 / NBRC 100330 / Delta H) (Methanobacterium thermoautotrophicum).